The primary structure comprises 510 residues: MTKRALLSVSDKQGLTDFAKGLVALDYELISTGGTKKALEAADIPVIGIEEVTGFPEMLDGRVKTLHPKVHAGLLARRDLPAHMAQLKAAGIQPIDMVVVNLYPFKATIQQPDVTQAEAIEQIDIGGPSMLRSAAKNFAAVLPIVDPADYEQILADLQTDAVTPALRQRLAAKVFQHTAAYDALIAQYLTTEEFPEKLTLTYDKKQALRYGENSHQKAAFYENALPTHFSITGAKQIHGKELSYNNIKDADAALRMVSEYQQPAVVAMKHMNPCGVGLGTTIEAAWDKAYEADSISIFGGIIALNRPVDLATAEKMHALFLEIIIAPSFDDDAFAILAKKKNLRLMTVDFEQTHTADKFETISVGGGLLRQEVDAAFETPADFTVVTVTQPTPAQLKALAFGQQVVKHVKSNAVVVTTADRTLGIGSGQMNRIDSTKIAIGKAMKQAGYENAILASDAFFPMDDCVEYAAQHGIRAIVQPGGSIRDKDSIAMADRYGIAMVTTGVRHFRH.

An MGS-like domain is found at 1-145 (MTKRALLSVS…KNFAAVLPIV (145 aa)).

This sequence belongs to the PurH family.

The enzyme catalyses (6R)-10-formyltetrahydrofolate + 5-amino-1-(5-phospho-beta-D-ribosyl)imidazole-4-carboxamide = 5-formamido-1-(5-phospho-D-ribosyl)imidazole-4-carboxamide + (6S)-5,6,7,8-tetrahydrofolate. The catalysed reaction is IMP + H2O = 5-formamido-1-(5-phospho-D-ribosyl)imidazole-4-carboxamide. Its pathway is purine metabolism; IMP biosynthesis via de novo pathway; 5-formamido-1-(5-phospho-D-ribosyl)imidazole-4-carboxamide from 5-amino-1-(5-phospho-D-ribosyl)imidazole-4-carboxamide (10-formyl THF route): step 1/1. It participates in purine metabolism; IMP biosynthesis via de novo pathway; IMP from 5-formamido-1-(5-phospho-D-ribosyl)imidazole-4-carboxamide: step 1/1. This Lactiplantibacillus plantarum (strain ATCC BAA-793 / NCIMB 8826 / WCFS1) (Lactobacillus plantarum) protein is Bifunctional purine biosynthesis protein PurH.